The chain runs to 469 residues: Extracellular endo-alpha-(1-&gt;5)-L-arabinanase 2 (469 aa).

An N-terminal signal peptide occupies residues 1–26; the sequence is MFNRLFRVCFLAALIMAFTLPNSVYA. D38 serves as the catalytic Proton acceptor. Residues D38, D122, 168-171, 188-190, and 220-224 contribute to the substrate site; these read NVVD, SYS, and HSRIE. The Proton donor role is filled by E224. H318 provides a ligand contact to Ca(2+).

This sequence belongs to the glycosyl hydrolase 43 family. In terms of assembly, homodimer. Ca(2+) is required as a cofactor.

It localises to the secreted. It catalyses the reaction Endohydrolysis of (1-&gt;5)-alpha-arabinofuranosidic linkages in (1-&gt;5)-arabinans.. It participates in glycan metabolism; L-arabinan degradation. In terms of biological role, involved in the degradation of arabinan and is a key enzyme in the complete degradation of the plant cell wall. Catalyzes the internal cleavage of alpha-(1-&gt;5)-L-arabinofuranosyl residues of the alpha-1,5-L-arabinan to produce arabino-oligosaccharides and L-arabinose. It is also active toward linear branched sugar beet arabinan, and pectin from apple. In Bacillus subtilis (strain 168), this protein is Extracellular endo-alpha-(1-&gt;5)-L-arabinanase 2 (abn2).